Here is a 410-residue protein sequence, read N- to C-terminus: ACT domain-containing protein ACR10 (410 aa).

3 ACT domains span residues 22-105, 114-197, and 245-324; these read VITI…SESQ, LLKL…LVGP, and LIHI…VVMM.

In terms of biological role, may bind amino acids. The chain is ACT domain-containing protein ACR10 from Arabidopsis thaliana (Mouse-ear cress).